A 98-amino-acid polypeptide reads, in one-letter code: uncharacterized protein (98 aa).

Belongs to the Rv1128c/1148c/1588c/1702c/1945/3466 family.

This is an uncharacterized protein from Mycobacterium tuberculosis (strain ATCC 25618 / H37Rv).